The primary structure comprises 1047 residues: tRNA wybutosine-synthesizing protein 4 (1047 aa).

S-adenosyl-L-methionine-binding positions include arginine 69, glycine 95, aspartate 122, 169 to 170 (DL), and glutamate 196. Residues 814–1003 (GRQYLRSISA…AAGRDVYGNR (190 aa)) form the JmjC domain.

It belongs to the methyltransferase superfamily. LCMT family.

The catalysed reaction is 7-[(3S)-3-amino-3-carboxypropyl]wyosine(37) in tRNA(Phe) + S-adenosyl-L-methionine = 7-[(3S)-(3-amino-3-methoxycarbonyl)propyl]wyosine(37) in tRNA(Phe) + S-adenosyl-L-homocysteine. It carries out the reaction 7-[(3S)-(3-amino-3-methoxycarbonyl)propyl]wyosine(37) in tRNA(Phe) + S-adenosyl-L-methionine + CO2 = wybutosine(37) in tRNA(Phe) + S-adenosyl-L-homocysteine + 2 H(+). It functions in the pathway tRNA modification; wybutosine-tRNA(Phe) biosynthesis. Probable S-adenosyl-L-methionine-dependent methyltransferase that acts as a component of the wybutosine biosynthesis pathway. Wybutosine is a hyper modified guanosine with a tricyclic base found at the 3'-position adjacent to the anticodon of eukaryotic phenylalanine tRNA. May methylate the carboxyl group of leucine residues to form alpha-leucine ester residues. The sequence is that of tRNA wybutosine-synthesizing protein 4 (ppm2) from Aspergillus fumigatus (strain ATCC MYA-4609 / CBS 101355 / FGSC A1100 / Af293) (Neosartorya fumigata).